The chain runs to 149 residues: Stathmin (149 aa).

The residue at position 2 (Ala-2) is an N-acetylalanine. Phosphoserine is present on Ser-4. The SLD domain occupies 4 to 145; the sequence is SDIQVKELEK…NKESKDPADE (142 aa). The residue at position 9 (Lys-9) is an N6-acetyllysine. Ser-16 is modified (phosphoserine; by PKA). Position 25 is a phosphoserine; by CDK1, MAPK1 and MAPK3 (Ser-25). A disordered region spans residues 27–46; it reads RSKESVPDFPLSPPKKKDLS. Position 29 is an N6-methyllysine (Lys-29). Ser-31 is subject to Phosphoserine. The residue at position 38 (Ser-38) is a Phosphoserine; by CDK1, MAPK1 and MAPK3. Residues 41 to 140 are a coiled coil; sequence KKKDLSLEEI…EEVRKNKESK (100 aa). Ser-63 is modified (phosphoserine; by PKA). 2 positions are modified to N6-acetyllysine: Lys-100 and Lys-119. A compositionally biased stretch (basic and acidic residues) spans 104-143; that stretch reads KMEANKENREAQMAAKLERLREKDKHVEEVRKNKESKDPA. Residues 104-149 form a disordered region; sequence KMEANKENREAQMAAKLERLREKDKHVEEVRKNKESKDPADETEAD.

It belongs to the stathmin family. In terms of assembly, binds to two alpha/beta-tubulin heterodimers. Interacts with KIST. In terms of processing, many different phosphorylated forms are observed depending on specific combinations among the sites which can be phosphorylated. MAPK is responsible for the phosphorylation of stathmin in response to NGF. Phosphorylation at Ser-16 seems to be required for neuron polarization. In terms of tissue distribution, highly expressed in the lateral nucleus of the amygdala.

The protein localises to the cytoplasm. It is found in the cytoskeleton. Functionally, involved in the regulation of the microtubule (MT) filament system by destabilizing microtubules. Prevents assembly and promotes disassembly of microtubules. Phosphorylation at Ser-16 may be required for axon formation during neurogenesis. Involved in the control of the learned and innate fear. This is Stathmin (Stmn1) from Mus musculus (Mouse).